Here is a 276-residue protein sequence, read N- to C-terminus: 2,3,4,5-tetrahydropyridine-2,6-dicarboxylate N-succinyltransferase (276 aa).

The substrate site is built by Arg-104 and Asp-141.

Belongs to the transferase hexapeptide repeat family. In terms of assembly, homotrimer.

Its subcellular location is the cytoplasm. It catalyses the reaction (S)-2,3,4,5-tetrahydrodipicolinate + succinyl-CoA + H2O = (S)-2-succinylamino-6-oxoheptanedioate + CoA. It participates in amino-acid biosynthesis; L-lysine biosynthesis via DAP pathway; LL-2,6-diaminopimelate from (S)-tetrahydrodipicolinate (succinylase route): step 1/3. The protein is 2,3,4,5-tetrahydropyridine-2,6-dicarboxylate N-succinyltransferase of Legionella pneumophila (strain Corby).